We begin with the raw amino-acid sequence, 390 residues long: Methylthioribose-1-phosphate isomerase (390 aa).

Asp263 acts as the Proton donor in catalysis.

The protein belongs to the eIF-2B alpha/beta/delta subunits family. MtnA subfamily.

The protein resides in the cytoplasm. Its subcellular location is the nucleus. The catalysed reaction is 5-(methylsulfanyl)-alpha-D-ribose 1-phosphate = 5-(methylsulfanyl)-D-ribulose 1-phosphate. Its pathway is amino-acid biosynthesis; L-methionine biosynthesis via salvage pathway; L-methionine from S-methyl-5-thio-alpha-D-ribose 1-phosphate: step 1/6. In terms of biological role, catalyzes the interconversion of methylthioribose-1-phosphate (MTR-1-P) into methylthioribulose-1-phosphate (MTRu-1-P). The protein is Methylthioribose-1-phosphate isomerase of Meyerozyma guilliermondii (strain ATCC 6260 / CBS 566 / DSM 6381 / JCM 1539 / NBRC 10279 / NRRL Y-324) (Yeast).